A 137-amino-acid chain; its full sequence is Putative mucosal pentraxin homolog (137 aa).

Residues 1-137 (MGMYLLHIGN…YVVTKPKVWA (137 aa)) form the Pentraxin (PTX) domain. Glu-73, Asp-75, and Gln-85 together coordinate Ca(2+).

The protein belongs to the pentraxin family. Not expressed in the intestinal tract including ascending colon, descending colon and rectum. Not expressed in the human colon cancer cell lines HT-29 and CaCo-2.

This chain is Putative mucosal pentraxin homolog (MPTX1), found in Homo sapiens (Human).